We begin with the raw amino-acid sequence, 98 residues long: Co-chaperonin GroES (98 aa).

Belongs to the GroES chaperonin family. Heptamer of 7 subunits arranged in a ring. Interacts with the chaperonin GroEL.

It localises to the cytoplasm. Its function is as follows. Together with the chaperonin GroEL, plays an essential role in assisting protein folding. The GroEL-GroES system forms a nano-cage that allows encapsulation of the non-native substrate proteins and provides a physical environment optimized to promote and accelerate protein folding. GroES binds to the apical surface of the GroEL ring, thereby capping the opening of the GroEL channel. The protein is Co-chaperonin GroES of Leifsonia xyli subsp. xyli (strain CTCB07).